The chain runs to 381 residues: Queuine tRNA-ribosyltransferase (381 aa).

Aspartate 92 serves as the catalytic Proton acceptor. Substrate-binding positions include aspartate 92–phenylalanine 96, aspartate 146, glutamine 190, and glycine 217. Residues glycine 248–aspartate 254 form an RNA binding region. Aspartate 267 (nucleophile) is an active-site residue. Residues threonine 272–arginine 276 are RNA binding; important for wobble base 34 recognition. Zn(2+)-binding residues include cysteine 305, cysteine 307, cysteine 310, and histidine 337.

It belongs to the queuine tRNA-ribosyltransferase family. Homodimer. Within each dimer, one monomer is responsible for RNA recognition and catalysis, while the other monomer binds to the replacement base PreQ1. It depends on Zn(2+) as a cofactor.

It carries out the reaction 7-aminomethyl-7-carbaguanine + guanosine(34) in tRNA = 7-aminomethyl-7-carbaguanosine(34) in tRNA + guanine. It participates in tRNA modification; tRNA-queuosine biosynthesis. Its function is as follows. Catalyzes the base-exchange of a guanine (G) residue with the queuine precursor 7-aminomethyl-7-deazaguanine (PreQ1) at position 34 (anticodon wobble position) in tRNAs with GU(N) anticodons (tRNA-Asp, -Asn, -His and -Tyr). Catalysis occurs through a double-displacement mechanism. The nucleophile active site attacks the C1' of nucleotide 34 to detach the guanine base from the RNA, forming a covalent enzyme-RNA intermediate. The proton acceptor active site deprotonates the incoming PreQ1, allowing a nucleophilic attack on the C1' of the ribose to form the product. After dissociation, two additional enzymatic reactions on the tRNA convert PreQ1 to queuine (Q), resulting in the hypermodified nucleoside queuosine (7-(((4,5-cis-dihydroxy-2-cyclopenten-1-yl)amino)methyl)-7-deazaguanosine). The chain is Queuine tRNA-ribosyltransferase from Xanthomonas campestris pv. campestris (strain 8004).